A 725-amino-acid polypeptide reads, in one-letter code: A-type inclusion protein A25 (725 aa).

Coiled-coil stretches lie at residues 418–521 and 547–719; these read GNSG…RNGK and EIDK…NAET. Tandem repeats lie at residues 609-635, 636-663, 664-687, and 699-725. The tract at residues 609-718 is 4 X approximate tandem repeats; it reads VRRELEEERR…CRRNNETNAE (110 aa).

This sequence belongs to the poxviridae A25 protein family. In terms of assembly, interacts (via N-terminus) with protein A26.

Its subcellular location is the virion. Structural protein that forms a matrix surrounding the mature virion (MV) through interaction with protein A26. Presence of protein A25 in the virion structurally prevents direct virus-cell fusion mechanism. The polypeptide is A-type inclusion protein A25 (Vaccinia virus (strain Western Reserve) (VACV)).